Reading from the N-terminus, the 680-residue chain is DNA ligase (680 aa).

NAD(+)-binding positions include 32 to 36 (DAVYD), 81 to 82 (SL), and E115. The N6-AMP-lysine intermediate role is filled by K117. Residues R138, E175, K291, and K315 each coordinate NAD(+). Zn(2+) contacts are provided by C409, C412, C427, and C432. The BRCT domain occupies 600-680 (ASEQHLKGLT…RLQAMLKDSP (81 aa)).

This sequence belongs to the NAD-dependent DNA ligase family. LigA subfamily. Mg(2+) is required as a cofactor. Requires Mn(2+) as cofactor.

The catalysed reaction is NAD(+) + (deoxyribonucleotide)n-3'-hydroxyl + 5'-phospho-(deoxyribonucleotide)m = (deoxyribonucleotide)n+m + AMP + beta-nicotinamide D-nucleotide.. In terms of biological role, DNA ligase that catalyzes the formation of phosphodiester linkages between 5'-phosphoryl and 3'-hydroxyl groups in double-stranded DNA using NAD as a coenzyme and as the energy source for the reaction. It is essential for DNA replication and repair of damaged DNA. This Synechococcus sp. (strain CC9902) protein is DNA ligase.